Here is a 279-residue protein sequence, read N- to C-terminus: Pleckstrin homology domain-containing family F member 1 (279 aa).

A PH domain is found at valine 35–arginine 131. The FYVE-type zinc finger occupies aspartate 152–alanine 212. 8 residues coordinate Zn(2+): cysteine 158, cysteine 161, cysteine 175, cysteine 178, cysteine 183, cysteine 186, cysteine 204, and cysteine 207. A disordered region spans residues alanine 220 to threonine 263. Acidic residues predominate over residues glycine 244–arginine 253.

In terms of tissue distribution, widely expressed.

The protein localises to the nucleus. The protein resides in the cytoplasm. It is found in the perinuclear region. Its subcellular location is the lysosome. May induce apoptosis through the lysosomal-mitochondrial pathway. Translocates to the lysosome initiating the permeabilization of lysosomal membrane (LMP) and resulting in the release of CTSD and CTSL to the cytoplasm. Triggers the caspase-independent apoptosis by altering mitochondrial membrane permeabilization (MMP) resulting in the release of PDCD8. The polypeptide is Pleckstrin homology domain-containing family F member 1 (Plekhf1) (Mus musculus (Mouse)).